The primary structure comprises 1044 residues: Ras GTPase-activating protein 1 (1044 aa).

Position 1 is an N-acetylmethionine (Met1). Residues 1-160 are hydrophobic; sequence MMAAEAGGEE…DEGDSLDGPE (160 aa). Residues 178–269 enclose the SH2 1 domain; the sequence is WYHGKLDRTI…LKGEKLLYPV (92 aa). Positions 276–338 constitute an SH3 domain; that stretch reads EDRRRVRAIL…VEDLVEEVGR (63 aa). One can recognise an SH2 2 domain in the interval 348 to 438; it reads WFHGKISKQE…VEGYYLKEPV (91 aa). Positions 471-574 constitute a PH domain; it reads NIVKKGYLLK…WMKGLQAFCN (104 aa). Residues 574–687 enclose the C2 domain; sequence NLRKSSPGTS…QKGHATDEWF (114 aa). Tyr612 carries the phosphotyrosine modification. Repeats lie at residues 646–664 and 665–683; these read PDIN…KSKD and PDIL…GHAT. The region spanning 761–971 is the Ras-GAP domain; the sequence is KLESLLLCTL…HRMIMFLDEL (211 aa). Ser828 carries the post-translational modification Phosphoserine.

As to quaternary structure, interacts with SQSTM1. Interacts with SPSB1; the interaction does not promote degradation. Interacts with CAV2 (tyrosine phosphorylated form). Directly interacts with NCK1. Interacts with PDGFRB (tyrosine phosphorylated). Interacts (via SH2 domain) with the 'Tyr-9' phosphorylated form of PDPK1. Interacts with tyrosine-phosphorylated EPHB4. In terms of processing, phosphorylated by SRC and LCK. The phosphorylation SRC inhibits its ability to stimulate the Ras-GTPase activity, whereas phosphorylation by LCK does not display any effect on stimulation activity.

It is found in the cytoplasm. In terms of biological role, inhibitory regulator of the Ras-cyclic AMP pathway. Stimulates the GTPase of normal but not oncogenic Ras p21. This is Ras GTPase-activating protein 1 (RASA1) from Bos taurus (Bovine).